Here is a 234-residue protein sequence, read N- to C-terminus: Purine nucleoside phosphorylase DeoD-type (234 aa).

Residue His-5 coordinates a purine D-ribonucleoside. Phosphate-binding positions include Gly-21, Arg-25, Arg-44, and 88–91 (RVGT). Residues 178–180 (EME) and 202–203 (SD) each bind a purine D-ribonucleoside. Asp-203 serves as the catalytic Proton donor.

Belongs to the PNP/UDP phosphorylase family. Homohexamer; trimer of homodimers.

The catalysed reaction is a purine D-ribonucleoside + phosphate = a purine nucleobase + alpha-D-ribose 1-phosphate. The enzyme catalyses a purine 2'-deoxy-D-ribonucleoside + phosphate = a purine nucleobase + 2-deoxy-alpha-D-ribose 1-phosphate. Functionally, catalyzes the reversible phosphorolytic breakdown of the N-glycosidic bond in the beta-(deoxy)ribonucleoside molecules, with the formation of the corresponding free purine bases and pentose-1-phosphate. This Lactococcus lactis subsp. lactis (strain IL1403) (Streptococcus lactis) protein is Purine nucleoside phosphorylase DeoD-type.